Consider the following 489-residue polypeptide: MEPGLEHALRRTPSWSSLGGSEHQEMSFLEQENSSSWPSPAVTSSSERIRGKRRAKALRWTRQKSVEEGEPPGQGEGPRSRPAAESTGLEATFPKTTPLAQADPAGVGTPPTGWDCLPSDCTASAAGSSTDDVELATEFPATEAWECELEGLLEERPALCLSPQAPFPKLGWDDELRKPGAQIYMRFMQEHTCYDAMATSSKLVIFDTMLEIKKAFFALVANGVRAAPLWDSKKQSFVGMLTITDFILVLHRYYRSPLVQIYEIEQHKIETWREIYLQGCFKPLVSISPNDSLFEAVYTLIKNRIHRLPVLDPVSGNVLHILTHKRLLKFLHIFGSLLPRPSFLYRTIQDLGIGTFRDLAVVLETAPILTALDIFVDRRVSALPVVNECGQVVGLYSRFDVIHLAAQQTYNHLDMSVGEALRQRTLCLEGVLSCQPHESLGEVIDRIAREQVHRLVLVDETQHLLGVVSLSDILQALVLSPAGIDALGA.

Residues 1-113 (MEPGLEHALR…PAGVGTPPTG (113 aa)) are disordered. The segment covering 34-46 (SSSWPSPAVTSSS) has biased composition (low complexity). The segment covering 50-62 (RGKRRAKALRWTR) has biased composition (basic residues). CBS domains are found at residues 197 to 258 (MATS…RSPL), 280 to 340 (CFKP…LLPR), and 355 to 415 (TFRD…HLDM). ADP is bound by residues Arg225, 240–245 (MLTITD), Val285, 306–307 (HR), and Lys325. AMP contacts are provided by residues Arg225, 240 to 245 (MLTITD), Val285, His306, 306 to 307 (HR), Lys325, Thr355, Ala360, 381 to 382 (SA), 397 to 400 (SRFD), Arg424, Leu432, His453, 453 to 454 (HR), and 469 to 472 (SLSD). ATP is bound by residues Arg225, 240–245 (MLTITD), Val285, 306–307 (HR), Arg307, and Lys325. The short motif at 293-314 (LFEAVYTLIKNRIHRLPVLDPV) is the AMPK pseudosubstrate element. ADP-binding positions include 397-400 (SRFD), Arg424, Leu432, and 453-454 (HR). Residues 397 to 400 (SRFD), Arg424, Leu432, and 453 to 454 (HR) each bind ATP. Residues 427–486 (CLEGVLSCQPHESLGEVIDRIAREQVHRLVLVDETQHLLGVVSLSDILQALVLSPAGIDA) enclose the CBS 4 domain.

Belongs to the 5'-AMP-activated protein kinase gamma subunit family. In terms of assembly, AMPK is a heterotrimer of an alpha catalytic subunit (PRKAA1 or PRKAA2), a beta (PRKAB1 or PRKAB2) and a gamma non-catalytic subunits (PRKAG1, PRKAG2 or PRKAG3). Interacts with FNIP1 and FNIP2. In terms of processing, phosphorylated by ULK1; leading to negatively regulate AMPK activity and suggesting the existence of a regulatory feedback loop between ULK1 and AMPK. Post-translationally, glycosylated; O-GlcNAcylated by OGT, promoting the AMP-activated protein kinase (AMPK) activity. As to expression, skeletal muscle, with weak expression in heart and pancreas.

In terms of biological role, AMP/ATP-binding subunit of AMP-activated protein kinase (AMPK), an energy sensor protein kinase that plays a key role in regulating cellular energy metabolism. In response to reduction of intracellular ATP levels, AMPK activates energy-producing pathways and inhibits energy-consuming processes: inhibits protein, carbohydrate and lipid biosynthesis, as well as cell growth and proliferation. AMPK acts via direct phosphorylation of metabolic enzymes, and by longer-term effects via phosphorylation of transcription regulators. AMPK also acts as a regulator of cellular polarity by remodeling the actin cytoskeleton; probably by indirectly activating myosin. The AMPK gamma3 subunit is a non-catalytic subunit with a regulatory role in muscle energy metabolism. It mediates binding to AMP, ADP and ATP, leading to AMPK activation or inhibition: AMP-binding results in allosteric activation of alpha catalytic subunit (PRKAA1 or PRKAA2) both by inducing phosphorylation and preventing dephosphorylation of catalytic subunits. ADP also stimulates phosphorylation, without stimulating already phosphorylated catalytic subunit. ATP promotes dephosphorylation of catalytic subunit, rendering the AMPK enzyme inactive. The polypeptide is 5'-AMP-activated protein kinase subunit gamma-3 (PRKAG3) (Homo sapiens (Human)).